A 57-amino-acid polypeptide reads, in one-letter code: Large ribosomal subunit protein bL32 (57 aa).

Positions 1-19 (MAVPKRRMSRSNTRSRRSQ) are enriched in basic residues. The tract at residues 1-22 (MAVPKRRMSRSNTRSRRSQWKA) is disordered.

It belongs to the bacterial ribosomal protein bL32 family.

This is Large ribosomal subunit protein bL32 from Rhodococcus jostii (strain RHA1).